The primary structure comprises 146 residues: MNLQAVSCSFGFLSSPLGVTPRTSFRRFVIRAKTEPSEKSVEIMRKFSEQYARRSGTYFCVDKGVTSVVIKGLAEHKDSYGAPLCPCRHYDDKAAEVGQGFWNCPCVPMRERKECHCMLFLTPDNDFAGKDQTITSDEIKETTANM.

Residues 1–31 (MNLQAVSCSFGFLSSPLGVTPRTSFRRFVIR) constitute a chloroplast transit peptide. Cysteine 85 serves as a coordination point for [4Fe-4S] cluster. The Nucleophile role is filled by cysteine 87. A disulfide bridge links cysteine 87 with cysteine 117. [4Fe-4S] cluster is bound by residues cysteine 104, cysteine 106, and cysteine 115.

The protein belongs to the ferredoxin thioredoxin reductase beta subunit family. As to quaternary structure, heterodimer of subunit A (variable subunit) and subunit B (catalytic subunit). Heterodimeric FTR forms a complex with ferredoxin and thioredoxin. [4Fe-4S] cluster serves as cofactor.

It is found in the plastid. The protein resides in the chloroplast. The catalysed reaction is [thioredoxin]-disulfide + 2 reduced [2Fe-2S]-[ferredoxin] + 2 H(+) = [thioredoxin]-dithiol + 2 oxidized [2Fe-2S]-[ferredoxin]. In terms of biological role, catalytic subunit of the ferredoxin-thioredoxin reductase (FTR), which catalyzes the two-electron reduction of thioredoxins by the electrons provided by reduced ferredoxin. The chain is Ferredoxin-thioredoxin reductase catalytic chain, chloroplastic from Arabidopsis thaliana (Mouse-ear cress).